The chain runs to 263 residues: MFYALYFEIHHLVASAALGFARVAPIFFFLPFLNSGVLSGAPRNAIIILVALGVWPHALNEAPPFLSVAMIPLVLQEAAVGVMLGCLLSWPFWVMHALGCIIDNQRGATLSSSIDPANGIDTSEMANFLNMFAAVVYLQNGGLVTMVDVLNKSYQLCDPMNECTPSLPPLLTFINQVAQNALVLASPVVLVLLLSEVFLGLLSRFAPQMNAFAISLTVKSGIAVLIMLLYFSPVLPDNVLRLSFQATGLSSWFYERGATHVLE.

Transmembrane regions (helical) follow at residues 12 to 32 (LVAS…FLPF), 46 to 66 (IIIL…PPFL), 82 to 102 (VMLG…GCII), 127 to 147 (NFLN…VTMV), 182 to 202 (LVLA…LGLL), and 211 to 231 (AFAI…LLYF).

It belongs to the FliR/MopE/SpaR family.

It is found in the cell membrane. In terms of biological role, involved in a secretory pathway responsible for the surface presentation of determinants needed for the entry of Salmonella species into mammalian cells. This chain is Surface presentation of antigens protein SpaR (spaR), found in Salmonella typhimurium (strain LT2 / SGSC1412 / ATCC 700720).